A 308-amino-acid polypeptide reads, in one-letter code: Pantothenate synthetase (308 aa).

Position 39–46 (39–46 (MGALHDGH)) interacts with ATP. His46 (proton donor) is an active-site residue. Gln71 contacts (R)-pantoate. Gln71 serves as a coordination point for beta-alanine. 157 to 160 (GEKD) contributes to the ATP binding site. (R)-pantoate is bound at residue Gln163. Residues Val186 and 194-197 (MSSR) each bind ATP. Positions 286-308 (IETPAGTAGPDGDRQYAQSPWRN) are disordered.

It belongs to the pantothenate synthetase family. Homodimer.

The protein resides in the cytoplasm. It catalyses the reaction (R)-pantoate + beta-alanine + ATP = (R)-pantothenate + AMP + diphosphate + H(+). The protein operates within cofactor biosynthesis; (R)-pantothenate biosynthesis; (R)-pantothenate from (R)-pantoate and beta-alanine: step 1/1. In terms of biological role, catalyzes the condensation of pantoate with beta-alanine in an ATP-dependent reaction via a pantoyl-adenylate intermediate. The chain is Pantothenate synthetase from Mycolicibacterium paratuberculosis (strain ATCC BAA-968 / K-10) (Mycobacterium paratuberculosis).